The sequence spans 452 residues: Phosphoglucosamine mutase (452 aa).

The Phosphoserine intermediate role is filled by Ser-112. Mg(2+)-binding residues include Ser-112, Asp-251, Asp-253, and Asp-255. Residue Ser-112 is modified to Phosphoserine.

The protein belongs to the phosphohexose mutase family. The cofactor is Mg(2+). Activated by phosphorylation.

The catalysed reaction is alpha-D-glucosamine 1-phosphate = D-glucosamine 6-phosphate. Its function is as follows. Catalyzes the conversion of glucosamine-6-phosphate to glucosamine-1-phosphate. This Bordetella bronchiseptica (strain ATCC BAA-588 / NCTC 13252 / RB50) (Alcaligenes bronchisepticus) protein is Phosphoglucosamine mutase.